A 333-amino-acid polypeptide reads, in one-letter code: MFIDSAKIYVKAGDGGKGCVSFRHEKFVPKGGPDGGDGGTGGSIFVKADANLATLLDFRYQRHYKAERGEHGQGSRKTGRSAKDVIIKVPVGTIVKDSETGEPLADLVYAGQEVLIAKGGHGGKGNQHFATPTNRAPRYSEPAGVGEERNIDLELKLLADIGLVGFPNAGKSTLISTISAARPKIANYPFTTLEPNLGIVRYAEYQSFVVADIPGIIEGASEGKGLGLKFLKHIERTKVLAILIPADTEDVQAEYDTLIEELRKFDESLCLKPRIVVLSKMDLVLEDASFEVPAFEGEKVVQISSVTGTGLQELKDVLWRIIQESNQQEESIT.

The Obg domain occupies 1–158 (MFIDSAKIYV…RNIDLELKLL (158 aa)). A disordered region spans residues 121 to 143 (HGGKGNQHFATPTNRAPRYSEPA). Residues 159–323 (ADIGLVGFPN…LKDVLWRIIQ (165 aa)) form the OBG-type G domain. GTP contacts are provided by residues 165-172 (GFPNAGKS), 190-194 (FTTLE), 212-215 (DIPG), 279-282 (SKMD), and 304-306 (SSV). The Mg(2+) site is built by serine 172 and threonine 192.

The protein belongs to the TRAFAC class OBG-HflX-like GTPase superfamily. OBG GTPase family. Monomer. Mg(2+) is required as a cofactor.

It localises to the cytoplasm. Functionally, an essential GTPase which binds GTP, GDP and possibly (p)ppGpp with moderate affinity, with high nucleotide exchange rates and a fairly low GTP hydrolysis rate. Plays a role in control of the cell cycle, stress response, ribosome biogenesis and in those bacteria that undergo differentiation, in morphogenesis control. The sequence is that of GTPase Obg from Chloroherpeton thalassium (strain ATCC 35110 / GB-78).